The chain runs to 108 residues: Iron-sulfur cluster assembly protein CyaY (108 aa).

It belongs to the frataxin family.

In terms of biological role, involved in iron-sulfur (Fe-S) cluster assembly. May act as a regulator of Fe-S biogenesis. This Pseudoalteromonas atlantica (strain T6c / ATCC BAA-1087) protein is Iron-sulfur cluster assembly protein CyaY.